We begin with the raw amino-acid sequence, 351 residues long: Large ribosomal subunit protein uL3 (351 aa).

2 disordered regions span residues 1-31 (MGHR…TPRT) and 246-271 (KGSR…GQLG).

Belongs to the universal ribosomal protein uL3 family. In terms of assembly, part of the 50S ribosomal subunit. Forms a cluster with proteins L14 and L24e.

Its function is as follows. One of the primary rRNA binding proteins, it binds directly near the 3'-end of the 23S rRNA, where it nucleates assembly of the 50S subunit. The protein is Large ribosomal subunit protein uL3 of Saccharolobus islandicus (strain M.14.25 / Kamchatka #1) (Sulfolobus islandicus).